The sequence spans 368 residues: Chaperone protein DnaJ (368 aa).

The J domain occupies 5 to 70 (DYYQVLGVPR…KKRKLYDTHG (66 aa)). The CR-type zinc finger occupies 124–201 (GVERQIQIPT…CNGAGRVEDH (78 aa)). Zn(2+) contacts are provided by C137, C140, C153, C156, C175, C178, C189, and C192. 4 CXXCXGXG motif repeats span residues 137 to 144 (CTHCHGSG), 153 to 160 (CGTCRGSG), 175 to 182 (CPHCGGRG), and 189 to 196 (CKVCNGAG).

Belongs to the DnaJ family. Homodimer. It depends on Zn(2+) as a cofactor.

Its subcellular location is the cytoplasm. Participates actively in the response to hyperosmotic and heat shock by preventing the aggregation of stress-denatured proteins and by disaggregating proteins, also in an autonomous, DnaK-independent fashion. Unfolded proteins bind initially to DnaJ; upon interaction with the DnaJ-bound protein, DnaK hydrolyzes its bound ATP, resulting in the formation of a stable complex. GrpE releases ADP from DnaK; ATP binding to DnaK triggers the release of the substrate protein, thus completing the reaction cycle. Several rounds of ATP-dependent interactions between DnaJ, DnaK and GrpE are required for fully efficient folding. Also involved, together with DnaK and GrpE, in the DNA replication of plasmids through activation of initiation proteins. This chain is Chaperone protein DnaJ, found in Xylella fastidiosa (strain 9a5c).